The following is a 543-amino-acid chain: MGAYLSQPNTVKCSGDGVGASRLPLPYGFSAMQGWRVSMEDAHNCIPELDSETAMFSVYDGHGGEEVALYCAKYLPDIIKDQKAYKEGKLQKALEDAFLAIDAKLTTEEVIKELAQIAGRPTEDEDEKEKVADEDDVDNEEAALLHEEATMTIEELLTRYGQNCHKGAPHSKSGAGTGEEPGSQGLNGEAGPEDPSRETSAEENGPTAKAHTGLSSNSECGTEAGQGGEPGTPTGEAGPSCSSASDKLPRVAKSKFFEDSEDESDEAEEEEEDSEECSEEEDGYSSEEAENEEDEDDTEEAEEDDEEEEMMVPGMEGKEEPGSDSGTTAVVALIRGKQLIVANAGDSRCVVSEAGKALDMSYDHKPEDEVELARIKNAGGKVTMDGRVNGGLNLSRAIGDHFYKRNKNLPPEEQMISALPDIKVLTLTDDHEFMVIACDGIWNVMSSQEVIDFIQSKISQRDENGELRLLSSIVEELLDQCLAPDTSGDGTGCDNMTCIIICFKPRNTAAPQPESGKRKLEEVLSTEGAEENGNSDKKKAKRD.

Gly2 carries the N-myristoyl glycine lipid modification. Residue Arg22 is modified to Omega-N-methylarginine. The 478-residue stretch at Pro26–Phe503 folds into the PPM-type phosphatase domain. Mn(2+) contacts are provided by Asp60 and Gly61. 2 disordered regions span residues Gln116–Asn139 and Asn163–Gly326. Thr122 is modified (phosphothreonine). Residues Glu123–Asn139 show a composition bias toward acidic residues. Ser183 is subject to Phosphoserine. A compositionally biased stretch (acidic residues) spans Asp259–Met310. N6-acetyllysine is present on Lys381. 2 residues coordinate Mn(2+): Asp439 and Asp494. The segment at Thr508–Asp543 is disordered. Ser525 carries the phosphoserine modification.

It belongs to the PP2C family. Interacts with NOL3; may dephosphorylate NOL3. Mg(2+) serves as cofactor. It depends on Mn(2+) as a cofactor.

The protein resides in the cytoplasm. It is found in the membrane. The catalysed reaction is O-phospho-L-seryl-[protein] + H2O = L-seryl-[protein] + phosphate. It carries out the reaction O-phospho-L-threonyl-[protein] + H2O = L-threonyl-[protein] + phosphate. The sequence is that of Protein phosphatase 1G (PPM1G) from Bos taurus (Bovine).